Reading from the N-terminus, the 364-residue chain is Uroporphyrinogen decarboxylase (364 aa).

The coproporphyrinogen I site is built by Arg-34, Ala-36, Arg-38, Arg-47, Asp-83, Tyr-161, Ser-216, and His-336. 3 residues coordinate coproporphyrinogen III: Arg-34, Ala-36, and Arg-38. The coproporphyrinogen III site is built by Asp-83, Tyr-161, Ser-216, and His-336.

This sequence belongs to the uroporphyrinogen decarboxylase family. As to quaternary structure, homodimer.

It is found in the cytoplasm. The protein localises to the cytosol. The enzyme catalyses uroporphyrinogen III + 4 H(+) = coproporphyrinogen III + 4 CO2. It carries out the reaction uroporphyrinogen I + 4 H(+) = coproporphyrinogen I + 4 CO2. Its pathway is porphyrin-containing compound metabolism; protoporphyrin-IX biosynthesis; coproporphyrinogen-III from 5-aminolevulinate: step 4/4. Its function is as follows. Catalyzes the sequential decarboxylation of the four acetate side chains of uroporphyrinogen to form coproporphyrinogen and participates in the fifth step in the heme biosynthetic pathway. Isomer I or isomer III of uroporphyrinogen may serve as substrate, but only coproporphyrinogen III can ultimately be converted to heme. In vitro also decarboxylates pentacarboxylate porphyrinogen I. In Rattus norvegicus (Rat), this protein is Uroporphyrinogen decarboxylase.